The sequence spans 249 residues: Ribonuclease PH (249 aa).

Phosphate contacts are provided by residues arginine 86 and 124-126; that span reads GTR.

Belongs to the RNase PH family. Homohexameric ring arranged as a trimer of dimers.

It catalyses the reaction tRNA(n+1) + phosphate = tRNA(n) + a ribonucleoside 5'-diphosphate. Its function is as follows. Phosphorolytic 3'-5' exoribonuclease that plays an important role in tRNA 3'-end maturation. Removes nucleotide residues following the 3'-CCA terminus of tRNAs; can also add nucleotides to the ends of RNA molecules by using nucleoside diphosphates as substrates, but this may not be physiologically important. Probably plays a role in initiation of 16S rRNA degradation (leading to ribosome degradation) during starvation. This chain is Ribonuclease PH, found in Clostridium botulinum (strain Alaska E43 / Type E3).